A 315-amino-acid polypeptide reads, in one-letter code: Methionyl-tRNA formyltransferase (315 aa).

107–110 (SLLP) contacts (6S)-5,6,7,8-tetrahydrofolate.

Belongs to the Fmt family.

It catalyses the reaction L-methionyl-tRNA(fMet) + (6R)-10-formyltetrahydrofolate = N-formyl-L-methionyl-tRNA(fMet) + (6S)-5,6,7,8-tetrahydrofolate + H(+). In terms of biological role, attaches a formyl group to the free amino group of methionyl-tRNA(fMet). The formyl group appears to play a dual role in the initiator identity of N-formylmethionyl-tRNA by promoting its recognition by IF2 and preventing the misappropriation of this tRNA by the elongation apparatus. In Borrelia garinii subsp. bavariensis (strain ATCC BAA-2496 / DSM 23469 / PBi) (Borreliella bavariensis), this protein is Methionyl-tRNA formyltransferase.